Consider the following 2548-residue polypeptide: Variant-silencing SET domain-containing protein (2548 aa).

The segment covering 37 to 48 (IDDDDDDDNDNN) has biased composition (acidic residues). Disordered regions lie at residues 37–61 (IDDDDDDDNDNNEEPKEMNINKTNN), 336–379 (GDPK…DDDN), and 585–629 (SVDR…NTQT). Over residues 336-357 (GDPKKRIERNKQEIEDHRREQD) the composition is skewed to basic and acidic residues. Acidic residues predominate over residues 358 to 378 (GENDQEEDNYDDYDDEDDDDD). A compositionally biased stretch (low complexity) spans 602-616 (NGSNNNNSSSNNNNN). Positions 617–629 (ITHITNDCDNTQT) are enriched in polar residues. A PHD-type 1 zinc finger spans residues 787–846 (FYLCEFCEQNIFDMNNMIKKDKAKECMYRCNISCGRTFHKACVCYIKNNDNYICFFCLYD). Residues 929–944 (IKRRHIYRKRRRRGPR) show a composition bias toward basic residues. Disordered regions lie at residues 929 to 1054 (IKRR…CDEN), 1546 to 1575 (EKNTKNKLCNNDNNNNNNNKGKNTKYNTLD), 1713 to 1732 (EQGSINNAKHNEQGSINNAK), and 1772 to 1822 (INNA…DDHR). Residues 986-1016 (DNNDDNNDNNDDNNDNNDDNNDNNDNNDDNN) show a composition bias toward acidic residues. Low complexity-rich tracts occupy residues 1017–1050 (NDNNNNNNNDNNDNNNNNNNNNNNNDNDNNNNNN) and 1551–1572 (NKLCNNDNNNNNNNKGKNTKYN). Over residues 1714-1732 (QGSINNAKHNEQGSINNAK) the composition is skewed to polar residues. The 51-residue stretch at 2067-2117 (SDDYKCLCQGECNLYTCYNSLSNIQCSKSRCNLPEKIQDRKCFNRPFRKSF) folds into the AWS domain. An SET domain is found at 2119–2240 (KDLEIKKTEK…SGEEITYNYS (122 aa)). Tyrosine 2239 provides a ligand contact to S-adenosyl-L-methionine. The PHD-type 2 zinc-finger motif lies at 2423 to 2471 (DEVCRKCKSCGNLTMCDKCFQSYHQLCGNMHSKMYKNNELVLCRFCQKY).

It belongs to the class V-like SAM-binding methyltransferase superfamily.

The protein localises to the nucleus. It localises to the chromosome. The catalysed reaction is L-lysyl(36)-[histone H3] + 3 S-adenosyl-L-methionine = N(6),N(6),N(6)-trimethyl-L-lysyl(36)-[histone H3] + 3 S-adenosyl-L-homocysteine + 3 H(+). Its function is as follows. Histone methyltransferase that specifically represses expression of the surface antigen-coding var genes by mediating trimethylation of 'Lys-36' of histone H3 (H3K36me3) on var genes. SETVS-dependent H3K36me3 is specifically involved in var genes silencing, a central step malaria pathogenesis: each parasite contains 60 distinct var genes that each code for a different PfEMP1 protein. During infection, the clonal parasite population expresses only 1 gene at a time, while the 59 other var genes are silenced. The parasite then switches to the expression of a new variant antigen as an immune-evasion mechanism to avoid the host antibody response. Represses expression of both var mRNA and antisense long non-coding RNA. The protein is Variant-silencing SET domain-containing protein (SETVS) of Plasmodium falciparum (isolate 3D7).